The chain runs to 388 residues: LL-diaminopimelate aminotransferase (388 aa).

Substrate contacts are provided by Y16 and G41. Pyridoxal 5'-phosphate is bound by residues Y70, 104-105 (SK), Y129, N179, Y210, and 239-241 (SLS). Residues K105, Y129, and N179 each contribute to the substrate site. Residue K242 is modified to N6-(pyridoxal phosphate)lysine. R250 is a binding site for pyridoxal 5'-phosphate. R368 contacts substrate.

The protein belongs to the class-I pyridoxal-phosphate-dependent aminotransferase family. LL-diaminopimelate aminotransferase subfamily. In terms of assembly, homodimer. It depends on pyridoxal 5'-phosphate as a cofactor.

It catalyses the reaction (2S,6S)-2,6-diaminopimelate + 2-oxoglutarate = (S)-2,3,4,5-tetrahydrodipicolinate + L-glutamate + H2O + H(+). The protein operates within amino-acid biosynthesis; L-lysine biosynthesis via DAP pathway; LL-2,6-diaminopimelate from (S)-tetrahydrodipicolinate (aminotransferase route): step 1/1. In terms of biological role, involved in the synthesis of meso-diaminopimelate (m-DAP or DL-DAP), required for both lysine and peptidoglycan biosynthesis. Catalyzes the direct conversion of tetrahydrodipicolinate to LL-diaminopimelate. This chain is LL-diaminopimelate aminotransferase, found in Nitratidesulfovibrio vulgaris (strain ATCC 29579 / DSM 644 / CCUG 34227 / NCIMB 8303 / VKM B-1760 / Hildenborough) (Desulfovibrio vulgaris).